We begin with the raw amino-acid sequence, 149 residues long: Calmodulin (149 aa).

At A2 the chain carries N-acetylalanine. 4 EF-hand domains span residues 8–43 (DQIS…LGQN), 44–79 (PTEA…KMKD), 81–116 (DSEE…LGEK), and 117–149 (LTDE…MMAK). D21, D23, D25, C27, E32, D57, D59, N61, T63, E68, D94, D96, N98, and E105 together coordinate Ca(2+). K116 carries the post-translational modification N6,N6,N6-trimethyllysine. Residues D130, D132, D134, Q136, and E141 each contribute to the Ca(2+) site.

The protein belongs to the calmodulin family.

Calmodulin mediates the control of a large number of enzymes, ion channels and other proteins by Ca(2+). Among the enzymes to be stimulated by the calmodulin-Ca(2+) complex are a number of protein kinases and phosphatases. The polypeptide is Calmodulin (CAM) (Malus domestica (Apple)).